Here is a 228-residue protein sequence, read N- to C-terminus: UPF0173 metal-dependent hydrolase lin1612 (228 aa).

It belongs to the UPF0173 family.

This chain is UPF0173 metal-dependent hydrolase lin1612, found in Listeria innocua serovar 6a (strain ATCC BAA-680 / CLIP 11262).